A 415-amino-acid polypeptide reads, in one-letter code: Gamma-glutamyl phosphate reductase (415 aa).

This sequence belongs to the gamma-glutamyl phosphate reductase family.

The protein localises to the cytoplasm. It carries out the reaction L-glutamate 5-semialdehyde + phosphate + NADP(+) = L-glutamyl 5-phosphate + NADPH + H(+). Its pathway is amino-acid biosynthesis; L-proline biosynthesis; L-glutamate 5-semialdehyde from L-glutamate: step 2/2. Functionally, catalyzes the NADPH-dependent reduction of L-glutamate 5-phosphate into L-glutamate 5-semialdehyde and phosphate. The product spontaneously undergoes cyclization to form 1-pyrroline-5-carboxylate. The protein is Gamma-glutamyl phosphate reductase of Mycolicibacterium gilvum (strain PYR-GCK) (Mycobacterium gilvum (strain PYR-GCK)).